A 522-amino-acid polypeptide reads, in one-letter code: Poly(A) polymerase (522 aa).

Residues 63-65, 76-78, Asp-130, Lys-193, Tyr-202, and 211-212 each bind ATP; these read YGS, DID, and GI. Residues Asp-76, Asp-78, and Asp-130 each contribute to the Mg(2+) site. Positions 475–522 are disordered; sequence QLKAKEENSIPNEEKKEQLKKEMKQEANTIVKNSSTDDDFMKRFTRKN. The segment covering 476-499 has biased composition (basic and acidic residues); it reads LKAKEENSIPNEEKKEQLKKEMKQ.

The protein belongs to the poly(A) polymerase family. Mg(2+) serves as cofactor. It depends on Mn(2+) as a cofactor.

The protein localises to the cytoplasm. It localises to the nucleus. The catalysed reaction is RNA(n) + ATP = RNA(n)-3'-adenine ribonucleotide + diphosphate. In terms of biological role, polymerase that creates the 3'-poly(A) tail of mRNA's. May acquire specificity through interaction with a cleavage and polyadenylation factor. This chain is Poly(A) polymerase, found in Entamoeba histolytica (strain ATCC 30459 / HM-1:IMSS / ABRM).